The primary structure comprises 491 residues: uncharacterized protein (491 aa).

Transmembrane regions (helical) follow at residues 48 to 68 (LILV…VAPC), 85 to 105 (ALIL…SAPL), 112 to 132 (RMLL…CGLA), 140 to 160 (IFRF…SGTI), 174 to 194 (AVMS…SGFI), 202 to 222 (WIFW…LPLL), 277 to 297 (PIVI…YLVL), 317 to 337 (LNYI…GIFI), 358 to 378 (VPVI…YGWT), 383 to 403 (THWI…MLGW), 408 to 428 (TYLI…ACCV), and 455 to 475 (LLAF…WFGG).

This sequence belongs to the major facilitator superfamily.

Its subcellular location is the membrane. This is an uncharacterized protein from Schizosaccharomyces pombe (strain 972 / ATCC 24843) (Fission yeast).